The sequence spans 290 residues: Tegument protein VP22 (290 aa).

Positions 98–112 (STSHGRLSPTKTTPH) are enriched in polar residues. Residues 98-156 (STSHGRLSPTKTTPHPKSAGVTPPQRVPARPATRAAAPSATPTQPDCVAKQRTSPGVNS) are disordered. Over residues 118–142 (VTPPQRVPARPATRAAAPSATPTQP) the composition is skewed to low complexity. The short motif at 146-149 (AKQR) is the Nuclear localization signal element. The Nuclear export signal signature appears at 219 to 231 (LDRFLKAAAIRIL).

It belongs to the alphaherpesvirinae VP22 tegument protein family. As to quaternary structure, interacts with gE (via C-terminus); this interaction is necessary for the recruitment of VP22 to the Golgi and its packaging into virions. Interacts with gM (via C-terminus). Interacts with VP16; this interaction allows the formation of a tripartite complex composed of VP16, VP22 and UL41/VHS. Interacts with the capsid-binding protein UL16. Interacts with host CGAS. Highly phosphorylated in the host cell. Packaging is selective for underphosphorylated forms.

The protein localises to the virion tegument. It localises to the host cytoplasm. Its subcellular location is the host nucleus. It is found in the host Golgi apparatus. In terms of biological role, tegument protein that plays different roles during the time course of infection. Participates in both the accumulation of viral mRNAs and viral protein translation at late time of infection. Modulates the RNase activity of the virion host shutoff protein UL41 probably to ensure necessary levels of key cellular mRNAs and proteins. Plays a role in microtubule reorganization that occurs after viral infection by stabilizing microtubule network. Plays a role in the inhibition of host innate immune system by targeting the CGAS enzymatic activity which is the principal cytosolic DNA sensor that detects invading viral DNA. Acts by mediating disruption of liquid-like droplets in which CGAS is activated, thereby preventing CGAS activity. This is Tegument protein VP22 (11) from Equus caballus (Horse).